We begin with the raw amino-acid sequence, 355 residues long: Phosphate acyltransferase (355 aa).

The protein belongs to the PlsX family. As to quaternary structure, homodimer. Probably interacts with PlsY.

The protein localises to the cytoplasm. It catalyses the reaction a fatty acyl-[ACP] + phosphate = an acyl phosphate + holo-[ACP]. It participates in lipid metabolism; phospholipid metabolism. In terms of biological role, catalyzes the reversible formation of acyl-phosphate (acyl-PO(4)) from acyl-[acyl-carrier-protein] (acyl-ACP). This enzyme utilizes acyl-ACP as fatty acyl donor, but not acyl-CoA. In Azorhizobium caulinodans (strain ATCC 43989 / DSM 5975 / JCM 20966 / LMG 6465 / NBRC 14845 / NCIMB 13405 / ORS 571), this protein is Phosphate acyltransferase.